The following is a 614-amino-acid chain: 1-deoxy-D-xylulose-5-phosphate synthase (614 aa).

Thiamine diphosphate-binding positions include histidine 74 and 115–117 (GHS). Aspartate 146 is a binding site for Mg(2+). Thiamine diphosphate-binding positions include 147–148 (GA), asparagine 175, tyrosine 282, and glutamate 363. Asparagine 175 serves as a coordination point for Mg(2+).

It belongs to the transketolase family. DXPS subfamily. Homodimer. Mg(2+) serves as cofactor. The cofactor is thiamine diphosphate.

The enzyme catalyses D-glyceraldehyde 3-phosphate + pyruvate + H(+) = 1-deoxy-D-xylulose 5-phosphate + CO2. Its pathway is metabolic intermediate biosynthesis; 1-deoxy-D-xylulose 5-phosphate biosynthesis; 1-deoxy-D-xylulose 5-phosphate from D-glyceraldehyde 3-phosphate and pyruvate: step 1/1. Its function is as follows. Catalyzes the acyloin condensation reaction between C atoms 2 and 3 of pyruvate and glyceraldehyde 3-phosphate to yield 1-deoxy-D-xylulose-5-phosphate (DXP). The polypeptide is 1-deoxy-D-xylulose-5-phosphate synthase (Methylobacillus flagellatus (strain ATCC 51484 / DSM 6875 / VKM B-1610 / KT)).